The following is a 370-amino-acid chain: Queuine tRNA-ribosyltransferase (370 aa).

The active-site Proton acceptor is D89. Substrate contacts are provided by residues 89 to 93, D143, Q185, and G212; that span reads DSGGF. The RNA binding stretch occupies residues 243 to 249; it reads GVGTPED. D262 (nucleophile) is an active-site residue. An RNA binding; important for wobble base 34 recognition region spans residues 267–271; it reads TRNAR. Residues C300, C302, C305, and H331 each coordinate Zn(2+).

The protein belongs to the queuine tRNA-ribosyltransferase family. In terms of assembly, homodimer. Within each dimer, one monomer is responsible for RNA recognition and catalysis, while the other monomer binds to the replacement base PreQ1. Requires Zn(2+) as cofactor.

It carries out the reaction 7-aminomethyl-7-carbaguanine + guanosine(34) in tRNA = 7-aminomethyl-7-carbaguanosine(34) in tRNA + guanine. It participates in tRNA modification; tRNA-queuosine biosynthesis. Catalyzes the base-exchange of a guanine (G) residue with the queuine precursor 7-aminomethyl-7-deazaguanine (PreQ1) at position 34 (anticodon wobble position) in tRNAs with GU(N) anticodons (tRNA-Asp, -Asn, -His and -Tyr). Catalysis occurs through a double-displacement mechanism. The nucleophile active site attacks the C1' of nucleotide 34 to detach the guanine base from the RNA, forming a covalent enzyme-RNA intermediate. The proton acceptor active site deprotonates the incoming PreQ1, allowing a nucleophilic attack on the C1' of the ribose to form the product. After dissociation, two additional enzymatic reactions on the tRNA convert PreQ1 to queuine (Q), resulting in the hypermodified nucleoside queuosine (7-(((4,5-cis-dihydroxy-2-cyclopenten-1-yl)amino)methyl)-7-deazaguanosine). In Methylobacillus flagellatus (strain ATCC 51484 / DSM 6875 / VKM B-1610 / KT), this protein is Queuine tRNA-ribosyltransferase.